The sequence spans 343 residues: MSLAGKKITVHDMSLRDGMHPKRHQITLDQMRNIARGLDAAGVPLIEVTHGDGLGGASVNYGFPAHTDEAYLSAVIPELKQAKVSALLLPGIGTVEHLRMAHELGVGTIRVATHCTEADVSEQHIGLARTLGLDTVGFLMMAHMSSPEQLVVQAKLMESYGANCIYITDSAGHMLPDDVTARISQVRDALKPETELGFHGHHNLAMGVANSVAAVAAGANRIDAAAAGLGAGAGNTPMEVFVAVCDRMGIETGVDVFAISDVAEDLVVPIMDAPIRLDRDALTLGYAGVYSSFLLFAKRAEAKYGIPARDILVELGRQRLVGGQEDMIEDAALTMVRAREVVA.

Positions 8-260 (ITVHDMSLRD…ETGVDVFAIS (253 aa)) constitute a Pyruvate carboxyltransferase domain. 16–17 (RD) contacts substrate. Asp-17 contacts Mn(2+). The active-site Proton acceptor is His-20. Positions 170 and 199 each coordinate substrate. Positions 199 and 201 each coordinate Mn(2+). Position 290 (Tyr-290) interacts with substrate.

Belongs to the 4-hydroxy-2-oxovalerate aldolase family.

It carries out the reaction (S)-4-hydroxy-2-oxopentanoate = acetaldehyde + pyruvate. The chain is 4-hydroxy-2-oxovalerate aldolase 2 from Burkholderia lata (strain ATCC 17760 / DSM 23089 / LMG 22485 / NCIMB 9086 / R18194 / 383).